Here is a 410-residue protein sequence, read N- to C-terminus: Cytochrome P450(BM-1) (410 aa).

Heme is bound at residue Cys356.

The protein belongs to the cytochrome P450 family. It depends on heme as a cofactor.

It localises to the cytoplasm. Cytochromes P450 are a group of heme-thiolate monooxygenases. They oxidize a variety of structurally unrelated compounds, including steroids, fatty acids, and xenobiotics. The protein is Cytochrome P450(BM-1) (cyp106) of Priestia megaterium (strain ATCC 14581 / DSM 32 / CCUG 1817 / JCM 2506 / NBRC 15308 / NCIMB 9376 / NCTC 10342 / NRRL B-14308 / VKM B-512 / Ford 19) (Bacillus megaterium).